The primary structure comprises 120 residues: NAD(P)H-quinone oxidoreductase subunit 3, chloroplastic (120 aa).

The next 3 helical transmembrane spans lie at isoleucine 9–glycine 29, methionine 64–methionine 84, and valine 88–leucine 108.

This sequence belongs to the complex I subunit 3 family. As to quaternary structure, NDH is composed of at least 16 different subunits, 5 of which are encoded in the nucleus.

It localises to the plastid. The protein localises to the chloroplast thylakoid membrane. It carries out the reaction a plastoquinone + NADH + (n+1) H(+)(in) = a plastoquinol + NAD(+) + n H(+)(out). It catalyses the reaction a plastoquinone + NADPH + (n+1) H(+)(in) = a plastoquinol + NADP(+) + n H(+)(out). In terms of biological role, NDH shuttles electrons from NAD(P)H:plastoquinone, via FMN and iron-sulfur (Fe-S) centers, to quinones in the photosynthetic chain and possibly in a chloroplast respiratory chain. The immediate electron acceptor for the enzyme in this species is believed to be plastoquinone. Couples the redox reaction to proton translocation, and thus conserves the redox energy in a proton gradient. The chain is NAD(P)H-quinone oxidoreductase subunit 3, chloroplastic from Draba nemorosa (Woodland whitlowgrass).